Consider the following 369-residue polypeptide: 4-hydroxy-3-methylbut-2-en-1-yl diphosphate synthase (flavodoxin) (369 aa).

[4Fe-4S] cluster is bound by residues cysteine 270, cysteine 273, cysteine 305, and glutamate 312.

Belongs to the IspG family. The cofactor is [4Fe-4S] cluster.

It carries out the reaction (2E)-4-hydroxy-3-methylbut-2-enyl diphosphate + oxidized [flavodoxin] + H2O + 2 H(+) = 2-C-methyl-D-erythritol 2,4-cyclic diphosphate + reduced [flavodoxin]. It functions in the pathway isoprenoid biosynthesis; isopentenyl diphosphate biosynthesis via DXP pathway; isopentenyl diphosphate from 1-deoxy-D-xylulose 5-phosphate: step 5/6. In terms of biological role, converts 2C-methyl-D-erythritol 2,4-cyclodiphosphate (ME-2,4cPP) into 1-hydroxy-2-methyl-2-(E)-butenyl 4-diphosphate. The sequence is that of 4-hydroxy-3-methylbut-2-en-1-yl diphosphate synthase (flavodoxin) from Pseudomonas entomophila (strain L48).